Consider the following 501-residue polypeptide: Flagellin (501 aa).

The protein belongs to the bacterial flagellin family.

The protein localises to the secreted. It is found in the bacterial flagellum. Its function is as follows. Flagellin is the subunit protein which polymerizes to form the filaments of bacterial flagella. The polypeptide is Flagellin (fliC) (Salmonella choleraesuis (strain SC-B67)).